Reading from the N-terminus, the 229-residue chain is Large ribosomal subunit protein uL1 (229 aa).

It belongs to the universal ribosomal protein uL1 family. In terms of assembly, part of the 50S ribosomal subunit.

Its function is as follows. Binds directly to 23S rRNA. The L1 stalk is quite mobile in the ribosome, and is involved in E site tRNA release. Protein L1 is also a translational repressor protein, it controls the translation of the L11 operon by binding to its mRNA. The protein is Large ribosomal subunit protein uL1 of Haemophilus influenzae (strain PittEE).